Here is a 541-residue protein sequence, read N- to C-terminus: Formimidoyltransferase-cyclodeaminase (541 aa).

The interval 1–181 is formiminotransferase N-subdomain; it reads MSQLVECVPN…GATVTGARKF (181 aa). Histidine 82 (for formimidoyltransferase activity) is an active-site residue. 163 to 172 provides a ligand contact to folate; it reads GPSSFVPSWG. The tract at residues 182-326 is formiminotransferase C-subdomain; it reads LIAFNINLLS…PKERIIEYLV (145 aa). The interval 327-334 is linker; sequence PDSGPEQS. The interval 335–541 is cyclodeaminase/cyclohydrolase; the sequence is LLDTSLRGFV…VLGSLEARKE (207 aa). Catalysis depends on aspartate 412, which acts as the For cyclodeaminase activity. Serine 520 carries the post-translational modification Phosphoserine.

It in the C-terminal section; belongs to the cyclodeaminase/cyclohydrolase family. In the N-terminal section; belongs to the formiminotransferase family. As to quaternary structure, homooctamer, including four polyglutamate binding sites. The subunits are arranged as a tetramer of dimers, and form a planar ring-shaped structure.

It localises to the cytoplasm. The protein resides in the cytoskeleton. The protein localises to the microtubule organizing center. Its subcellular location is the centrosome. It is found in the centriole. It localises to the golgi apparatus. The catalysed reaction is 5-formimidoyltetrahydrofolate + L-glutamate = N-formimidoyl-L-glutamate + (6S)-5,6,7,8-tetrahydrofolate. It catalyses the reaction (6S)-5-formyl-5,6,7,8-tetrahydrofolate + L-glutamate = N-formyl-L-glutamate + (6S)-5,6,7,8-tetrahydrofolate + H(+). It carries out the reaction 5-formimidoyltetrahydrofolate + 2 H(+) = (6R)-5,10-methenyltetrahydrofolate + NH4(+). It participates in amino-acid degradation; L-histidine degradation into L-glutamate; L-glutamate from N-formimidoyl-L-glutamate (transferase route): step 1/1. The protein operates within one-carbon metabolism; tetrahydrofolate interconversion. Its function is as follows. Folate-dependent enzyme, that displays both transferase and deaminase activity. Serves to channel one-carbon units from formiminoglutamate to the folate pool. Binds and promotes bundling of vimentin filaments originating from the Golgi. The protein is Formimidoyltransferase-cyclodeaminase (Ftcd) of Mus musculus (Mouse).